Reading from the N-terminus, the 109-residue chain is Small ribosomal subunit protein uS17 (109 aa).

Belongs to the universal ribosomal protein uS17 family. Part of the 30S ribosomal subunit.

One of the primary rRNA binding proteins, it binds specifically to the 5'-end of 16S ribosomal RNA. In Methanococcus maripaludis (strain DSM 14266 / JCM 13030 / NBRC 101832 / S2 / LL), this protein is Small ribosomal subunit protein uS17.